The sequence spans 380 residues: MTTFNTVTRHPNYYTSYTKIAPKDYIISRLKALKAKIAKVNPMAIRDNKWSDLHIAVGAKELKLVKALCNEKNINATDAKCRTPLELAILGNDLETVKFLVQMGGKIAPNMYGWSAIHLAIKIDNVEMVEYLYENTEFQKYDKYGYTLHDWAEAMGRGEIVRFFHDKNHNNKTPLELAVESKNISSVKALIIKGAKFDIKSELGYKIFELAIDSEDMKLIEYLVNHTLVGKNTGQQTLLEKVAQIYDKNINLSKLVKVLIKDNAGFDKALGQKLLQKAIYADDLELVETLYSKGVDAQYKDQLGRSGLHHAIKANCGEELIQFLIEHTTDINYRDKSGLNPLGLAKSNNCTVATKLLLEAGAYESYMYDDVIKVLGEYGY.

ANK repeat units follow at residues 48–76, 80–109, 112–143, 170–199, 203–233, 239–268, 270–299, 303–333, and 337–366; these read NKWS…NINA, KCRT…KIAP, YGWS…KYDK, NNKT…KFDI, LGYK…GKNT, LEKV…GFDK, LGQK…DAQY, LGRS…DINY, and SGLN…YESY.

The sequence is that of Putative ankyrin repeat protein RF_1306 from Rickettsia felis (strain ATCC VR-1525 / URRWXCal2) (Rickettsia azadi).